A 97-amino-acid chain; its full sequence is Large ribosomal subunit protein bL27 (97 aa).

The propeptide occupies 1–12; the sequence is MIKLNLSNLQHF. The segment at 13–38 is disordered; the sequence is AHKKGGGSTSNGRDSQAKRLGAKAAD.

Belongs to the bacterial ribosomal protein bL27 family. In terms of processing, the N-terminus is cleaved by ribosomal processing cysteine protease Prp.

The polypeptide is Large ribosomal subunit protein bL27 (Streptococcus equi subsp. equi (strain 4047)).